We begin with the raw amino-acid sequence, 417 residues long: Gamma-glutamyl phosphate reductase (417 aa).

The protein belongs to the gamma-glutamyl phosphate reductase family.

The protein resides in the cytoplasm. The enzyme catalyses L-glutamate 5-semialdehyde + phosphate + NADP(+) = L-glutamyl 5-phosphate + NADPH + H(+). It participates in amino-acid biosynthesis; L-proline biosynthesis; L-glutamate 5-semialdehyde from L-glutamate: step 2/2. Its function is as follows. Catalyzes the NADPH-dependent reduction of L-glutamate 5-phosphate into L-glutamate 5-semialdehyde and phosphate. The product spontaneously undergoes cyclization to form 1-pyrroline-5-carboxylate. The chain is Gamma-glutamyl phosphate reductase from Legionella pneumophila subsp. pneumophila (strain Philadelphia 1 / ATCC 33152 / DSM 7513).